The primary structure comprises 121 residues: MSITKDQIIEAVAAMSVMDVVELISAMEEKFGVSAAAAVAVAAGPVETAEEKTEFDVILKAAGANKVAVIKAVRGATGLGLKEAKDLVESAPAALKEGVSKDDAEALKKALEEAGAEVEVK.

It belongs to the bacterial ribosomal protein bL12 family. In terms of assembly, homodimer. Part of the ribosomal stalk of the 50S ribosomal subunit. Forms a multimeric L10(L12)X complex, where L10 forms an elongated spine to which 2 to 4 L12 dimers bind in a sequential fashion. Binds GTP-bound translation factors.

Forms part of the ribosomal stalk which helps the ribosome interact with GTP-bound translation factors. Is thus essential for accurate translation. In Escherichia coli O81 (strain ED1a), this protein is Large ribosomal subunit protein bL12.